The sequence spans 379 residues: Putative acetyl-CoA C-acetyltransferase VraB (379 aa).

Cys-86 serves as the catalytic Acyl-thioester intermediate. Residue His-338 is the Proton acceptor of the active site.

The protein belongs to the thiolase-like superfamily. Thiolase family.

This chain is Putative acetyl-CoA C-acetyltransferase VraB (vraB), found in Staphylococcus aureus (strain Mu3 / ATCC 700698).